Consider the following 809-residue polypeptide: Sodium/hydrogen exchanger 2 (809 aa).

7 helical membrane-spanning segments follow: residues Ile-107–Gly-127, Thr-138–Pro-158, Ile-169–Phe-189, Leu-209–Ile-229, Ile-237–Phe-257, Phe-278–Phe-298, and Val-308–Phe-328. Asn-350 is a glycosylation site (N-linked (GlcNAc...) asparagine). 4 helical membrane-spanning segments follow: residues Tyr-361–Ser-381, Ala-392–Leu-412, Phe-430–Pro-450, and Leu-459–Ile-479. Basic and acidic residues-rich tracts occupy residues Ile-648–Ala-660 and Arg-793–Pro-809. 2 disordered regions span residues Ile-648–Ala-700 and Glu-734–Pro-809.

This sequence belongs to the monovalent cation:proton antiporter 1 (CPA1) transporter (TC 2.A.36) family. As to quaternary structure, interacts with CHP1 and CHP2. As to expression, high levels in intestine and kidney. Strongly expressed in gastric epithelial cells, with particularly high expression levels in mucous cells.

It is found in the apical cell membrane. The enzyme catalyses Na(+)(in) + H(+)(out) = Na(+)(out) + H(+)(in). In terms of biological role, plasma membrane Na(+)/H(+) antiporter. Mediates the electroneutral exchange of intracellular H(+) ions for extracellular Na(+). Major apical Na(+)/H(+) exchanger in the base of the colonic crypt. Controls in the colonic crypt intracellular pH (pHi) to direct colonic epithelial cell differentiation into the absorptive enterocyte lineage at the expense of the secretory lineage. The sequence is that of Sodium/hydrogen exchanger 2 (SLC9A2) from Oryctolagus cuniculus (Rabbit).